A 344-amino-acid chain; its full sequence is Phenylalanine--tRNA ligase alpha subunit (344 aa).

Glu-256 provides a ligand contact to Mg(2+).

The protein belongs to the class-II aminoacyl-tRNA synthetase family. Phe-tRNA synthetase alpha subunit type 1 subfamily. Tetramer of two alpha and two beta subunits. Mg(2+) serves as cofactor.

It localises to the cytoplasm. The catalysed reaction is tRNA(Phe) + L-phenylalanine + ATP = L-phenylalanyl-tRNA(Phe) + AMP + diphosphate + H(+). The chain is Phenylalanine--tRNA ligase alpha subunit from Anoxybacillus flavithermus (strain DSM 21510 / WK1).